Reading from the N-terminus, the 180-residue chain is Large ribosomal subunit protein uL6 (180 aa).

Belongs to the universal ribosomal protein uL6 family. In terms of assembly, part of the 50S ribosomal subunit.

Functionally, this protein binds to the 23S rRNA, and is important in its secondary structure. It is located near the subunit interface in the base of the L7/L12 stalk, and near the tRNA binding site of the peptidyltransferase center. The chain is Large ribosomal subunit protein uL6 from Borrelia recurrentis (strain A1).